Consider the following 520-residue polypeptide: RNA-binding protein MEX3A (520 aa).

The segment at 49–111 (GLGEPPAPTA…QPPTAPKGAS (63 aa)) is disordered. Residues 60–69 (EDGGGGGGGA) show a composition bias toward gly residues. A compositionally biased stretch (pro residues) spans 73-91 (PAAPPQPAPPPPPAAPPAA). KH domains follow at residues 132-193 (TTEC…RREI) and 223-284 (QVTI…REEI). The residue at position 338 (Ser-338) is a Phosphoserine. The segment at 412 to 461 (SSSSAKARAGPPGAHRSPATSAGPELAGLPRRPPGEPLQGFSKLGGGGLR) is disordered. Ser-462 is modified (phosphoserine). Residues 469–509 (CMVCFESEVTAALVPCGHNLFCMECAVRICERTDPECPVCH) form an RING-type zinc finger.

Phosphorylated. As to expression, highest levels found in fetal brain and testis. Detected also in thymus, salivary gland and uterus.

It is found in the cytoplasm. The protein resides in the nucleus. It localises to the P-body. RNA binding protein, may be involved in post-transcriptional regulatory mechanisms. The chain is RNA-binding protein MEX3A (MEX3A) from Homo sapiens (Human).